A 282-amino-acid chain; its full sequence is F-actin-capping protein subunit alpha (282 aa).

The protein belongs to the F-actin-capping protein alpha subunit family. As to quaternary structure, component of the F-actin capping complex, composed of a heterodimer of an alpha and a beta subunit.

It is found in the cytoplasm. Its subcellular location is the cytoskeleton. Functionally, F-actin-capping proteins bind in a Ca(2+)-independent manner to the fast growing ends of actin filaments (barbed end) thereby blocking the exchange of subunits at these ends. Unlike other capping proteins (such as gelsolin and severin), these proteins do not sever actin filaments. This Caenorhabditis elegans protein is F-actin-capping protein subunit alpha (cap-1).